The sequence spans 130 residues: UPF0212 protein TSIB_1358 (130 aa).

The protein belongs to the UPF0212 family.

In Thermococcus sibiricus (strain DSM 12597 / MM 739), this protein is UPF0212 protein TSIB_1358.